Here is a 133-residue protein sequence, read N- to C-terminus: ATP synthase epsilon chain (133 aa).

This sequence belongs to the ATPase epsilon chain family. F-type ATPases have 2 components, CF(1) - the catalytic core - and CF(0) - the membrane proton channel. CF(1) has five subunits: alpha(3), beta(3), gamma(1), delta(1), epsilon(1). CF(0) has three main subunits: a, b and c.

It localises to the cellular thylakoid membrane. In terms of biological role, produces ATP from ADP in the presence of a proton gradient across the membrane. The sequence is that of ATP synthase epsilon chain from Prochlorococcus marinus (strain MIT 9303).